The following is a 469-amino-acid chain: Glutamate--tRNA ligase 1 (469 aa).

The short motif at Pro8–Gly18 is the 'HIGH' region element. A disordered region spans residues Thr117–Ala137. The short motif at Lys240–Arg244 is the 'KMSKS' region element. Residue Lys243 participates in ATP binding.

This sequence belongs to the class-I aminoacyl-tRNA synthetase family. Glutamate--tRNA ligase type 1 subfamily. Monomer.

It localises to the cytoplasm. The catalysed reaction is tRNA(Glu) + L-glutamate + ATP = L-glutamyl-tRNA(Glu) + AMP + diphosphate. Functionally, catalyzes the attachment of glutamate to tRNA(Glu) in a two-step reaction: glutamate is first activated by ATP to form Glu-AMP and then transferred to the acceptor end of tRNA(Glu). The chain is Glutamate--tRNA ligase 1 from Aliarcobacter butzleri (strain RM4018) (Arcobacter butzleri).